Consider the following 421-residue polypeptide: Aspartokinase (421 aa).

7–10 (KYGG) lines the ATP pocket. 25-30 (RIVETK) contacts substrate. Position 41 (serine 41) interacts with ATP. Substrate-binding positions include 45 to 49 (DTTDD), glutamate 74, 125 to 126 (LD), 151 to 154 (RGGS), and serine 154. Residues 174-175 (TD), 180-185 (FTADPR), and lysine 210 each bind ATP. ACT domains lie at 267–348 (VTVV…GKVS) and 349–421 (LIGA…GTGR). Residues aspartate 274, 274 to 279 (DVPGYA), 292 to 294 (NID), glutamine 298, 360 to 361 (VT), 374 to 375 (NI), and 381 to 382 (SE) contribute to the substrate site.

Belongs to the aspartokinase family. In terms of assembly, heterotetramer consisting of 2 isoforms Alpha (catalytic and regulation) and of a homodimer of 2 isoforms Beta (regulation).

It carries out the reaction L-aspartate + ATP = 4-phospho-L-aspartate + ADP. Its pathway is amino-acid biosynthesis; L-lysine biosynthesis via DAP pathway; (S)-tetrahydrodipicolinate from L-aspartate: step 1/4. It functions in the pathway amino-acid biosynthesis; L-methionine biosynthesis via de novo pathway; L-homoserine from L-aspartate: step 1/3. The protein operates within amino-acid biosynthesis; L-threonine biosynthesis; L-threonine from L-aspartate: step 1/5. Its activity is regulated as follows. Feedback inhibition by lysine and threonine. In terms of biological role, catalyzes the phosphorylation of the beta-carboxyl group of aspartic acid with ATP to yield 4-phospho-L-aspartate, which is involved in the branched biosynthetic pathway leading to the biosynthesis of amino acids lysine, threonine, isoleucine and methionine. This Mycolicibacterium smegmatis (Mycobacterium smegmatis) protein is Aspartokinase (ask).